The chain runs to 180 residues: Ribulose bisphosphate carboxylase small subunit, chloroplastic 3 (180 aa).

The N-terminal 56 residues, 1–56 (MASSVMSSAAVATRGNGAQASMVAPFTGLKSTASFPVSRKQNLDITSIASNGGRVS), are a transit peptide targeting the chloroplast.

The protein belongs to the RuBisCO small chain family. In terms of assembly, heterohexadecamer of 8 large and 8 small subunits. As to quaternary structure, (Microbial infection) Binds to tobamovirus movement protein; this interaction seems required for viral systemic movement.

The protein resides in the plastid. It localises to the chloroplast. The protein localises to the cell junction. It is found in the plasmodesma. RuBisCO catalyzes two reactions: the carboxylation of D-ribulose 1,5-bisphosphate, the primary event in carbon dioxide fixation, as well as the oxidative fragmentation of the pentose substrate. Both reactions occur simultaneously and in competition at the same active site. Although the small subunit is not catalytic it is essential for maximal activity. Involved in antiviral defenses. The chain is Ribulose bisphosphate carboxylase small subunit, chloroplastic 3 from Solanum lycopersicum (Tomato).